A 268-amino-acid chain; its full sequence is Magnesium dechelatase SGR1, chloroplastic (268 aa).

The transit peptide at Met1–Val48 directs the protein to the chloroplast.

The protein belongs to the staygreen family. Interacts with HCAR, the chlorophyll catabolic enzymes (CCEs) NYC1, PAO and RCCR, and the LHCII complex. Part of a SGR1-CCE-LHCII complex, which acts in chlorophyll breakdown. As to expression, expressed in roots, leaves, seeds, flowers, buds, petals, sepals and siliques.

The protein resides in the plastid. It is found in the chloroplast thylakoid membrane. It carries out the reaction chlorophyll a + 2 H(+) = pheophytin a + Mg(2+). In terms of biological role, magnesium chelatase involved in chlorophyll a degradation in the chlorophyll-protein complexes of photosystem I (PSI) and photosystem II (PSII). Contributes to the degradation of PSI and PSII in the thylakoid membranes. Required to trigger chlorophyll degradation during natural and dark-induced leaf senescence. Mediates chlorophyll degradation during embryo degreening. Recombinant SGR1 possesses high dechelating activity against chlorophyll a, very low activity against chlorophyllide a, and no activity against chlorophyll b. Magnesium dechelation of chlorophyll a by SGR1 activates chlorophyll b degradation by inducing the expression of NYC1, an enzyme involved in chlorophyll b degradation. This Arabidopsis thaliana (Mouse-ear cress) protein is Magnesium dechelatase SGR1, chloroplastic.